A 674-amino-acid polypeptide reads, in one-letter code: ATP-dependent DNA helicase Hel308 (674 aa).

ATP is bound by residues glutamine 27 and 44–51 (VPTAAGKT). Residues 31 to 197 (IEQIRKGRNV…WLDASLIKSD (167 aa)) enclose the Helicase ATP-binding domain. The DEAH box motif lies at 142 to 145 (DEIH). In terms of domain architecture, Helicase C-terminal spans 224 to 411 (SINQIIRETV…EAKVRFNTLA (188 aa)).

The protein belongs to the helicase family. Hel308 subfamily. In terms of assembly, monomer.

The enzyme catalyses Couples ATP hydrolysis with the unwinding of duplex DNA by translocating in the 3'-5' direction.. It carries out the reaction ATP + H2O = ADP + phosphate + H(+). Functionally, DNA-dependent ATPase and 3'-5' DNA helicase that may be involved in repair of stalled replication forks. This chain is ATP-dependent DNA helicase Hel308, found in Thermoplasma acidophilum (strain ATCC 25905 / DSM 1728 / JCM 9062 / NBRC 15155 / AMRC-C165).